Here is a 928-residue protein sequence, read N- to C-terminus: Tyrosine-protein phosphatase 3 (928 aa).

Thr-75 carries the post-translational modification Phosphothreonine. Residues 111–232 enclose the Rhodanese domain; the sequence is PDEKVLLLDV…FKILFPDHIN (122 aa). The disordered stretch occupies residues 247–307; that stretch reads KSPKTNLMNS…PRNVLSDSPM (61 aa). The residue at position 248 (Ser-248) is a Phosphoserine. 2 stretches are compositionally biased toward polar residues: residues 249 to 259 and 265 to 275; these read PKTNLMNSLHN and TATTPLSSPQM. Basic and acidic residues predominate over residues 280 to 289; sequence KVPDDSRSDH. Residues 290 to 307 show a composition bias toward low complexity; sequence SNFSSSPSPRNVLSDSPM. Ser-297 and Ser-368 each carry phosphoserine. Disordered stretches follow at residues 467-487 and 672-713; these read LTST…NKVQ and MRKN…NNNN. The Tyrosine-protein phosphatase domain maps to 502-878; that stretch reads YKSMLSLESD…IFIYDCLLFY (377 aa). The span at 672–691 shows a compositional bias: polar residues; it reads MRKNTMGTQNSSLYSAGVQG. Residues 692-713 show a composition bias toward low complexity; it reads NSSNYSTDNDNDNDNNNNNNNN. The Phosphocysteine intermediate role is filled by Cys-804.

The protein belongs to the protein-tyrosine phosphatase family. Non-receptor class subfamily. As to quaternary structure, interacts with HOG1.

The protein resides in the cytoplasm. It catalyses the reaction O-phospho-L-tyrosyl-[protein] + H2O = L-tyrosyl-[protein] + phosphate. Its function is as follows. Major phosphatase responsible for tyrosine dephosphorylation of MAP kinases FUS3 and HOG1 to inactivate their activity; it also has important roles, along with MSG5, in the inactivation of FUS3 following pheromone stimulation. The polypeptide is Tyrosine-protein phosphatase 3 (PTP3) (Saccharomyces cerevisiae (strain ATCC 204508 / S288c) (Baker's yeast)).